Here is a 523-residue protein sequence, read N- to C-terminus: UDP-glucuronosyltransferase 3A2 (523 aa).

The first 22 residues, 1–22 (MAGQRVLLLVGFLLPGVLLSEA), serve as a signal peptide directing secretion. Over 23-483 (AKILTISTVG…YVFQQPWHEQ (461 aa)) the chain is Extracellular. An N-linked (GlcNAc...) asparagine glycan is attached at N52. Residues 484-504 (YLLDVFVFLLGLTLGTLWLCG) form a helical membrane-spanning segment. At 505–523 (KLLGMAVWWLRGARKVKET) the chain is on the cytoplasmic side.

This sequence belongs to the UDP-glycosyltransferase family.

Its subcellular location is the membrane. The catalysed reaction is glucuronate acceptor + UDP-alpha-D-glucuronate = acceptor beta-D-glucuronoside + UDP + H(+). In terms of biological role, UDP-glucuronosyltransferases catalyze phase II biotransformation reactions in which lipophilic substrates are conjugated with glucuronic acid to increase water solubility and enhance excretion. They are of major importance in the conjugation and subsequent elimination of potentially toxic xenobiotics and endogenous compounds. In Homo sapiens (Human), this protein is UDP-glucuronosyltransferase 3A2 (UGT3A2).